A 385-amino-acid polypeptide reads, in one-letter code: Heptahelical transmembrane protein 4 (385 aa).

The segment covering 1–12 (MGDEAEIKEHLK) has biased composition (basic and acidic residues). The segment at 1–22 (MGDEAEIKEHLKPQASSETMDK) is disordered. Residues 1 to 79 (MGDEAEIKEH…LSIFTIHNET (79 aa)) lie on the Cytoplasmic side of the membrane. Residues 80-100 (LNVWTHLIGFFLFLALTIYTA) traverse the membrane as a helical segment. The Extracellular segment spans residues 101–191 (TKVPSVVDLH…LIFRPITRWP (91 aa)). Residues 192–212 (FYAFLGGAMFCLLASSTCHLL) traverse the membrane as a helical segment. At 213–228 (SCHSERVSYIMLRLDY) the chain is on the cytoplasmic side. The helical transmembrane segment at 229–249 (AGIAALIATSFYPPVYYSFMC) threads the bilayer. Residues 250-256 (DPFFCNL) lie on the Extracellular side of the membrane. The helical transmembrane segment at 257–277 (YLGFITILGIATVLVSLLPVF) threads the bilayer. Residues 278–288 (QSPEFRVVRAS) lie on the Cytoplasmic side of the membrane. The helical transmembrane segment at 289-309 (LFFGMGFSGLAPILHKLIIFW) threads the bilayer. Topologically, residues 310–313 (DQPE) are extracellular. Residues 314–334 (ALHTTGYEILMGLLYGLGALV) form a helical membrane-spanning segment. Topologically, residues 335–356 (YATRIPERWMPGKFDIAGHSHQ) are cytoplasmic. Residues 357–377 (LFHVLVVAGAFTHYRAGLVYL) form a helical membrane-spanning segment.

The protein belongs to the ADIPOR family. In terms of tissue distribution, expressed in roots, leaves, stems and flowers.

The protein localises to the membrane. Its function is as follows. May play a role in abiotic stress response. This chain is Heptahelical transmembrane protein 4 (HHP4), found in Arabidopsis thaliana (Mouse-ear cress).